Reading from the N-terminus, the 444-residue chain is MHILVVSVNYRTAPVEFREKLTFQAAELERAMTTLQNQKSVLENVIVSTCNRTEIYAVVDQLHTGRYYIKKFLADWFQLEIEEVAPYLTIFEQDGAIDHLFRVTCGLDSMVVGETQILGQIKDSFLEAQQVKATGTIFNELFKQVITLAKRAHSETTIGESAMSVSYAAVELGKKIFGELTDCHVLILGAGKMGELALQNLYGSGARKVTVMNRTLSKAEVMAEKYMGHAKSLSELQCALLEADILISSTGASEYVITKEMMTKVEKMRSGRPLFMVDIAVPRDIDPAIDELEGSFLYDIDDLQGVVEANRAERLKEAEKIQFMIEEEIVLFKTWLSTLGVVPLISALRDKALAIQSETMVSLERKIPNLSDREKKVISKHTKSIINQLLKDPILVAKEIAAEEGASEKLALFAKIFDLETEEVESRAEEVEHKRVWTPSVPSL.

Residues 49–52, Ser109, 114–116, and Gln120 contribute to the substrate site; these read TCNR and ETQ. Cys50 (nucleophile) is an active-site residue. 189–194 serves as a coordination point for NADP(+); that stretch reads GAGKMG.

Belongs to the glutamyl-tRNA reductase family. As to quaternary structure, homodimer.

The enzyme catalyses (S)-4-amino-5-oxopentanoate + tRNA(Glu) + NADP(+) = L-glutamyl-tRNA(Glu) + NADPH + H(+). The protein operates within porphyrin-containing compound metabolism; protoporphyrin-IX biosynthesis; 5-aminolevulinate from L-glutamyl-tRNA(Glu): step 1/2. Functionally, catalyzes the NADPH-dependent reduction of glutamyl-tRNA(Glu) to glutamate 1-semialdehyde (GSA). This is Glutamyl-tRNA reductase from Bacillus cereus (strain G9842).